The following is a 593-amino-acid chain: Maternal uncoordinated protein 2 (593 aa).

Belongs to the SCC4/mau-2 family. May heterodimerize with scc-2/SCC2 to form the cohesin loading complex.

Its subcellular location is the nucleus. The protein localises to the nucleoplasm. The protein resides in the cytoplasm. Functionally, plays an important role in the loading of the cohesin complex on to DNA. Forms a heterodimeric complex (also known as cohesin loading complex) with scc-2/SCC2 which mediates the loading of the cohesin complex onto chromatin. Required for normal development until the fourth larval stage. Functions cell autonomously to guide migrations during the development of the nervous system. Participates in the guidance of mechanosensory neuron AVM by a slt-1-independent mechanism. Regulates chromosome segregation in early embryos. The protein is Maternal uncoordinated protein 2 of Caenorhabditis elegans.